The primary structure comprises 64 residues: Bacteriocin glycocin F (64 aa).

A signal peptide spans 1–21 (MSKLVKTLTISEISKAQNNGG). 2 cysteine pairs are disulfide-bonded: C26–C49 and C33–C42. A glycan (O-linked (GlcNAc) serine) is linked at S39. S-linked (GlcNAc) cysteine glycosylation occurs at C64.

It is found in the secreted. Its function is as follows. Has antibacterial activity against L.plantarum ATCC 8014. In purified form, the activity is bacteriostatic (IC(50)=2 nM) rather than bactericidal. The protein is Bacteriocin glycocin F of Lactiplantibacillus plantarum (Lactobacillus plantarum).